We begin with the raw amino-acid sequence, 281 residues long: DegV domain-containing protein SCO2569 (281 aa).

Positions 5–280 (VAIVTDSTAY…PGLLGVVVSS (276 aa)) constitute a DegV domain. Positions 62 and 95 each coordinate hexadecanoate.

Its function is as follows. May bind long-chain fatty acids, such as palmitate, and may play a role in lipid transport or fatty acid metabolism. The protein is DegV domain-containing protein SCO2569 of Streptomyces coelicolor (strain ATCC BAA-471 / A3(2) / M145).